Consider the following 447-residue polypeptide: Argininosuccinate synthase (447 aa).

Residues 17–25 (AFSGGLDTS) and A43 contribute to the ATP site. Y99 provides a ligand contact to L-citrulline. ATP contacts are provided by G129 and T131. The L-aspartate site is built by T131, N135, and D136. An L-citrulline-binding site is contributed by N135. Residue D136 coordinates ATP. L-citrulline-binding residues include R139 and S192. An ATP-binding site is contributed by D194. Residues T201, E203, and E280 each coordinate L-citrulline.

It belongs to the argininosuccinate synthase family. Type 2 subfamily. As to quaternary structure, homotetramer.

It is found in the cytoplasm. It carries out the reaction L-citrulline + L-aspartate + ATP = 2-(N(omega)-L-arginino)succinate + AMP + diphosphate + H(+). It participates in amino-acid biosynthesis; L-arginine biosynthesis; L-arginine from L-ornithine and carbamoyl phosphate: step 2/3. The sequence is that of Argininosuccinate synthase from Salmonella dublin (strain CT_02021853).